A 353-amino-acid polypeptide reads, in one-letter code: Tsukushi (353 aa).

Positions 1 to 16 (MPWPLLLLLAVSGAQT) are cleaved as a signal peptide. Positions 17–58 (TRPCFPGCQCEVETFGLFDSFSLTRVDCSGLGPHIMPVPIPL) constitute an LRRNT domain. LRR repeat units lie at residues 59–80 (DTAH…VLAG), 85–106 (TLAG…AFSR), 109–130 (YLES…SFTS), 132–153 (PLSD…AFTT), 159–179 (ALHV…PTRA), 185–206 (TIQS…RDLP), 207–227 (LRYL…AFAG), 230–249 (GLTH…APSG), 255–276 (GLQV…EVFS), and 280–301 (SLQE…LLLH). Residue Asn74 is glycosylated (N-linked (GlcNAc...) asparagine). Residue Asn137 is glycosylated (N-linked (GlcNAc...) asparagine).

Interacts with FZD4 (via FZ domain); competes with WNT2B for binding to FZD4, inhibiting Wnt signaling and repressing peripheral eye development. Interacts with TGFB1; the interaction contributes to regulation of the hair cycle. Interacts with netrin. Interacts with CCN2.

The protein resides in the secreted. Its function is as follows. Contributes to various developmental events and other processes such as wound healing and cholesterol homeostasis through its interactions with multiple signaling pathways. Wnt signaling inhibitor which competes with WNT2B for binding to Wnt receptor FZD4 and represses WNT2B-dependent development of the peripheral eye. Plays a role in regulating the hair cycle by controlling TGFB1 signaling. Required for the development of the anterior commissure in the brain by inhibiting neurite outgrowth. Essential for terminal differentiation of hippocampal neural stem cells. Plays a role in regulating bone elongation and bone mass by modulating growth plate chondrocyte function and overall body size. Required for development of the inner ear through its involvement in stereocilia formation in inner hair cells. Facilitates wound healing by inhibiting secretion of TGFB1 from macrophages which prevents myofibroblast differentiation, maintaining inflammatory cell quiescence. Plays a role in cholesterol homeostasis by reducing circulating high-density lipoprotein cholesterol, lowering cholesterol efflux capacity and decreasing cholesterol-to-bile acid conversion in the liver. In one study, shown to negatively regulate sympathetic innervation in brown fat, leading to reduced energy expenditure. In another study, shown not to affect brown fat thermogenic capacity, body weight gain or glucose homeostasis. This chain is Tsukushi (TSKU), found in Homo sapiens (Human).